The sequence spans 466 residues: Citrate synthase, mitochondrial (466 aa).

The N-terminal 27 residues, 1-27 (MALLTAAARLLGTKNASCLVLAARHAS), are a transit peptide targeting the mitochondrion. The short motif at 2 to 21 (ALLTAAARLLGTKNASCLVL) is the SIFI-degron element. K57 is modified (N6-succinyllysine). N6-acetyllysine; alternate is present on K76. K76 bears the N6-succinyllysine; alternate mark. N6-succinyllysine occurs at positions 103 and 193. The active site involves H301. Residues K321 and K327 each carry the N6-acetyllysine; alternate modification. N6-succinyllysine; alternate is present on residues K321 and K327. H347 is an active-site residue. Oxaloacetate is bound at residue R356. Residue K375 is modified to N6-acetyllysine; alternate. K375 bears the N6-succinyllysine; alternate mark. At K382 the chain carries N6-acetyllysine. K393 bears the N6-acetyllysine; alternate mark. K393 bears the N6-succinyllysine; alternate mark. K395 is modified (N6,N6,N6-trimethyllysine). Residue D402 is part of the active site. R428 and R448 together coordinate oxaloacetate. K450 carries the post-translational modification N6-succinyllysine. K459 carries the post-translational modification N6-acetyllysine; alternate. Position 459 is an N6-succinyllysine; alternate (K459).

This sequence belongs to the citrate synthase family. As to quaternary structure, homodimer. Methylated. Trimethylation at Lys-395 by CSKMT decreases citrate synthase activity. In terms of processing, in response to mitochondrial stress, the precursor protein is ubiquitinated by the SIFI complex in the cytoplasm before mitochondrial import, leading to its degradation. Within the SIFI complex, UBR4 initiates ubiquitin chain that are further elongated or branched by KCMF1.

It is found in the mitochondrion matrix. The catalysed reaction is oxaloacetate + acetyl-CoA + H2O = citrate + CoA + H(+). It participates in carbohydrate metabolism; tricarboxylic acid cycle; isocitrate from oxaloacetate: step 1/2. Key enzyme of the Krebs tricarboxylic acid cycle which catalyzes the synthesis of citrate from acetyl coenzyme A and oxaloacetate. The sequence is that of Citrate synthase, mitochondrial (CS) from Macaca fascicularis (Crab-eating macaque).